A 264-amino-acid polypeptide reads, in one-letter code: MQGITELLPISSTAHMRIVPALLGWQDPGSAFSAAMQLAALAAVISYFWGDVRDLLFGSLDALTRRDFSDRHFRLASWIVLATIPIVIAGVALSGVLNACNSPLRSLTVIGWSCIAMAILLALAEIFARHKRTIAEASLADALLVGVAQIGALIPGVSRSGSTLTAALGLGFKRAEAARFSFLLGLPAIALAGLKELWELHKVHLDAHGWSVLATGLVVASISAFFAIWGLMRVLERFSAWPFVIYRGLLGVVLLLGLAMGWLA.

7 helical membrane passes run 29 to 49 (GSAF…SYFW), 77 to 97 (SWIV…SGVL), 107 to 127 (LTVI…AEIF), 137 to 157 (ASLA…IPGV), 180 to 200 (FSFL…LWEL), 212 to 232 (VLAT…WGLM), and 243 to 263 (FVIY…MGWL).

The protein belongs to the UppP family.

It localises to the cell inner membrane. The catalysed reaction is di-trans,octa-cis-undecaprenyl diphosphate + H2O = di-trans,octa-cis-undecaprenyl phosphate + phosphate + H(+). Its function is as follows. Catalyzes the dephosphorylation of undecaprenyl diphosphate (UPP). Confers resistance to bacitracin. The chain is Undecaprenyl-diphosphatase 2 from Mesorhizobium japonicum (strain LMG 29417 / CECT 9101 / MAFF 303099) (Mesorhizobium loti (strain MAFF 303099)).